The sequence spans 193 residues: Superoxide dismutase [Fe] (193 aa).

Fe cation is bound by residues H27, H74, D157, and H161.

This sequence belongs to the iron/manganese superoxide dismutase family. As to quaternary structure, homodimer. It depends on Fe cation as a cofactor.

The enzyme catalyses 2 superoxide + 2 H(+) = H2O2 + O2. Destroys superoxide anion radicals which are normally produced within the cells and which are toxic to biological systems. Partially complements double sodA-sodB deletions in E.coli. The chain is Superoxide dismutase [Fe] from Pseudomonas aeruginosa (strain ATCC 15692 / DSM 22644 / CIP 104116 / JCM 14847 / LMG 12228 / 1C / PRS 101 / PAO1).